A 477-amino-acid chain; its full sequence is V-type ATP synthase beta chain (477 aa).

The protein belongs to the ATPase alpha/beta chains family.

Functionally, produces ATP from ADP in the presence of a proton gradient across the membrane. The V-type beta chain is a regulatory subunit. The sequence is that of V-type ATP synthase beta chain from Anaeromyxobacter sp. (strain K).